Here is an 894-residue protein sequence, read N- to C-terminus: Alpha-actinin-2 (894 aa).

Residues 1-254 (MNQIEPGVQY…IMTYVSCFYH (254 aa)) are actin-binding. Calponin-homology (CH) domains lie at 38-142 (KQQR…LRFA) and 151-257 (TSAK…HAFA). Residue Thr-237 is modified to Phosphothreonine. Spectrin repeat units lie at residues 281 to 391 (RLME…WLLN), 401 to 506 (HLAE…ALER), 516 to 627 (QLHL…SLQE), and 637 to 740 (RLRR…EVET). EF-hand domains lie at 753–788 (EQMN…MGYD) and 789–824 (LGEA…ETAD). Ca(2+) contacts are provided by Asp-766, Asn-770, Asp-777, Asp-802, Asn-804, and Thr-808.

The protein belongs to the alpha-actinin family. Homodimer; antiparallel. Also forms heterodimers with ACTN3. Interacts with ADAM12, MYOZ1, MYOZ2 and MYOZ3. Interacts via its C-terminal region with the LDB3 PDZ domain. Interacts with XIRP2. Interacts with DST isoform 1 (via N-terminus). Interacts with PARVB. Interacts with SYNPO2. Ubiquitinated by FBXL22, leading to proteasomal degradation. In terms of tissue distribution, expressed in both skeletal and cardiac muscle.

It is found in the cytoplasm. It localises to the myofibril. Its subcellular location is the sarcomere. The protein localises to the z line. F-actin cross-linking protein which is thought to anchor actin to a variety of intracellular structures. This is a bundling protein. The protein is Alpha-actinin-2 (ACTN2) of Homo sapiens (Human).